The following is a 225-amino-acid chain: uncharacterized protein (225 aa).

Residues 2-22 traverse the membrane as a helical segment; that stretch reads TIFYLVFIAVIIIIILYVLYL. N-linked (GlcNAc...) asparagine; by host glycosylation is present at Asn-73. A coiled-coil region spans residues 114 to 146; that stretch reads DYEDNYFNSNWNLKQLKNQLENLLREKNYKMVL. Residue Asn-222 is glycosylated (N-linked (GlcNAc...) asparagine; by host).

The protein localises to the membrane. This is an uncharacterized protein from Acanthamoeba polyphaga (Amoeba).